A 513-amino-acid polypeptide reads, in one-letter code: Probable vesicular acetylcholine transporter-A (513 aa).

Over 1-39 (MATEESGGLAQTAAVKLSEMGERTKQLGNAIQDPERQRR) the chain is Cytoplasmic. A helical transmembrane segment spans residues 40–60 (IILVIVCVALLLDNMLYMVIV). Topologically, residues 61–98 (PIVPDYLAHLESESEQAHVKGNSSINITQNENFDLQIG) are lumenal, vesicle. Residues asparagine 82 and asparagine 86 are each glycosylated (N-linked (GlcNAc...) asparagine). A helical transmembrane segment spans residues 99–119 (VLFASKAILQLLVNPLTGTFI). The Cytoplasmic portion of the chain corresponds to 120 to 125 (DRVGYD). The helical transmembrane segment at 126-146 (IPLLIGLSIMFVSTCIFAFAE) threads the bilayer. Residues 147 to 156 (NYATLFMARS) lie on the Lumenal, vesicle side of the membrane. Residues 157–174 (LQGLGSAFADTSGIAMIA) form a helical membrane-spanning segment. Over 175–186 (DKYAEESERSRA) the chain is Cytoplasmic. The chain crosses the membrane as a helical span at residues 187 to 207 (LGIALAFISFGSLAAPPFGGV). Residues 208-215 (LYEFAGKR) are Lumenal, vesicle-facing. The chain crosses the membrane as a helical span at residues 216–236 (FPFIALACVCLADGILCLTVL). Over 237-257 (KPFSSRTRENMPVGTPIYKLM) the chain is Cytoplasmic. Residues 258–278 (IDPYIAVVAGALTTCNIPLAF) traverse the membrane as a helical segment. The Lumenal, vesicle segment spans residues 279–296 (LEPTIANWMEETMNASQW). The N-linked (GlcNAc...) asparagine glycan is linked to asparagine 292. The helical transmembrane segment at 297–317 (QIGITWLPAFFPHILGVYLTV) threads the bilayer. Residues 318-327 (KLAAKYPHLQ) are Cytoplasmic-facing. A helical transmembrane segment spans residues 328 to 348 (WFYGALGMVIIGASSCIVPAC). Over 349 to 353 (KNFEQ) the chain is Lumenal, vesicle. A helical transmembrane segment spans residues 354-374 (LIIPLCGVCFGIALVDTALLP). Residues 375 to 390 (TLAFLVDVRHVSVYGS) are Cytoplasmic-facing. Residues 391 to 411 (VYAIADISYCVAYALGPIVAG) traverse the membrane as a helical segment. The Lumenal, vesicle segment spans residues 412-418 (KIVHDLG). The helical transmembrane segment at 419 to 439 (FVQLNLGMGLANVLYAPALLL) threads the bilayer. Residues 440-513 (LRNVSLMKPS…EEETSEPEYI (74 aa)) lie on the Cytoplasmic side of the membrane. The disordered stretch occupies residues 475-513 (RKKHGYSSSGNCVPIDENGTFAGQSKSFSEEETSEPEYI). Acidic residues predominate over residues 504–513 (EEETSEPEYI).

It belongs to the major facilitator superfamily. Vesicular transporter family.

The protein localises to the membrane. Involved in acetylcholine transport into synaptic vesicles. The sequence is that of Probable vesicular acetylcholine transporter-A from Danio rerio (Zebrafish).